The chain runs to 133 residues: ATP synthase epsilon chain, chloroplastic (133 aa).

This sequence belongs to the ATPase epsilon chain family. F-type ATPases have 2 components, CF(1) - the catalytic core - and CF(0) - the membrane proton channel. CF(1) has five subunits: alpha(3), beta(3), gamma(1), delta(1), epsilon(1). CF(0) has three main subunits: a, b and c.

It is found in the plastid. The protein localises to the chloroplast thylakoid membrane. Functionally, produces ATP from ADP in the presence of a proton gradient across the membrane. The sequence is that of ATP synthase epsilon chain, chloroplastic from Morus indica (Mulberry).